The sequence spans 239 residues: Large ribosomal subunit protein uL2 (239 aa).

The interval 203–239 is disordered; the sequence is PFGGKEHHPGKPTTTSRRAPPGRKVGHIAARRTGRRK. Over residues 222–239 the composition is skewed to basic residues; it reads PPGRKVGHIAARRTGRRK.

It belongs to the universal ribosomal protein uL2 family. As to quaternary structure, part of the 50S ribosomal subunit. Forms a bridge to the 30S subunit in the 70S ribosome.

Its function is as follows. One of the primary rRNA binding proteins. Required for association of the 30S and 50S subunits to form the 70S ribosome, for tRNA binding and peptide bond formation. It has been suggested to have peptidyltransferase activity; this is somewhat controversial. Makes several contacts with the 16S rRNA in the 70S ribosome. This Pyrococcus abyssi (strain GE5 / Orsay) protein is Large ribosomal subunit protein uL2.